Consider the following 633-residue polypeptide: Molybdenum cofactor biosynthesis protein 1 (633 aa).

Residues 1-380 are molybdenum cofactor biosynthesis protein A; the sequence is MAAQPVSRVV…QMKNRPMILI (380 aa). Ser-61 bears the Phosphoserine mark. The 235-residue stretch at 61 to 295 folds into the Radical SAM core domain; that stretch reads SFGRHHSYLR…AKAFKIPGFR (235 aa). GTP is bound at residue Arg-70. Residues Cys-77 and Cys-81 each coordinate [4Fe-4S] cluster. Tyr-83 contacts S-adenosyl-L-methionine. Residue Cys-84 coordinates [4Fe-4S] cluster. A GTP-binding site is contributed by Arg-120. Gly-124 contacts S-adenosyl-L-methionine. Thr-151 serves as a coordination point for GTP. Ser-175 contributes to the S-adenosyl-L-methionine binding site. The residue at position 195 (Lys-195) is an N6-acetyllysine. Residue Lys-212 participates in GTP binding. Residue Met-246 participates in S-adenosyl-L-methionine binding. [4Fe-4S] cluster-binding residues include Cys-309 and Cys-312. 314 to 316 provides a ligand contact to GTP; it reads RLR. Cys-326 is a binding site for [4Fe-4S] cluster. Residues 410–633 form a molybdenum cofactor biosynthesis protein C region; that stretch reads VSFSSQMVTL…GGQRGDFHRT (224 aa). A disordered region spans residues 446–480; the sequence is SSHLDSDANPKCLSPTEPQAPAASSGPLPDSDQLT. Lys-525 carries the post-translational modification N6-acetyllysine. Asp-603 serves as the catalytic For molybdenum cofactor biosynthesis protein C activity.

This sequence in the C-terminal section; belongs to the MoaC family. It in the N-terminal section; belongs to the radical SAM superfamily. MoaA family. As to quaternary structure, isoform MOCS1A and isoform MOCS1B probably form a heterooligomer. Requires [4Fe-4S] cluster as cofactor.

The enzyme catalyses GTP + AH2 + S-adenosyl-L-methionine = (8S)-3',8-cyclo-7,8-dihydroguanosine 5'-triphosphate + 5'-deoxyadenosine + L-methionine + A + H(+). It catalyses the reaction (8S)-3',8-cyclo-7,8-dihydroguanosine 5'-triphosphate = cyclic pyranopterin phosphate + diphosphate. The protein operates within cofactor biosynthesis; molybdopterin biosynthesis. Isoform MOCS1A and isoform MOCS1B probably form a complex that catalyzes the conversion of 5'-GTP to cyclic pyranopterin monophosphate (cPMP). MOCS1A catalyzes the cyclization of GTP to (8S)-3',8-cyclo-7,8-dihydroguanosine 5'-triphosphate and MOCS1B catalyzes the subsequent conversion of (8S)-3',8-cyclo-7,8-dihydroguanosine 5'-triphosphate to cPMP. This chain is Molybdenum cofactor biosynthesis protein 1 (MOCS1), found in Bos taurus (Bovine).